Reading from the N-terminus, the 667-residue chain is Fermitin family homolog 3 (667 aa).

Phosphoserine is present on Ser8. Tyr11 is modified (phosphotyrosine). Residues 229-558 form the FERM domain; that stretch reads WLDSSRCLMQ…SLPDFGISYV (330 aa). The region spanning 354–457 is the PH domain; sequence DHLRIFRIPR…WMAGCRLASK (104 aa). Position 504 is a phosphotyrosine (Tyr504). Thr591 is subject to Phosphothreonine.

Belongs to the kindlin family. In terms of assembly, interacts with ITGB1, ITGB2 and ITGB3 (via cytoplasmic tails). Highly expressed in lymph node. Expressed in thymus, spleen and leukocytes. Weakly expressed in placenta, small intestine, stomach, testis and lung. Overexpressed in B-cell malignancies.

It localises to the cell projection. It is found in the podosome. Plays a central role in cell adhesion in hematopoietic cells. Acts by activating the integrin beta-1-3 (ITGB1, ITGB2 and ITGB3). Required for integrin-mediated platelet adhesion and leukocyte adhesion to endothelial cells. Required for activation of integrin beta-2 (ITGB2) in polymorphonuclear granulocytes (PMNs). In terms of biological role, isoform 2 may act as a repressor of NF-kappa-B and apoptosis. This Homo sapiens (Human) protein is Fermitin family homolog 3 (FERMT3).